A 434-amino-acid polypeptide reads, in one-letter code: Trigger factor (434 aa).

The 86-residue stretch at 161 to 246 folds into the PPIase FKBP-type domain; the sequence is KDIVTIDFKG…IHKVEEPQLP (86 aa).

Belongs to the FKBP-type PPIase family. Tig subfamily.

The protein localises to the cytoplasm. The enzyme catalyses [protein]-peptidylproline (omega=180) = [protein]-peptidylproline (omega=0). Involved in protein export. Acts as a chaperone by maintaining the newly synthesized protein in an open conformation. Functions as a peptidyl-prolyl cis-trans isomerase. The chain is Trigger factor from Marinobacter nauticus (strain ATCC 700491 / DSM 11845 / VT8) (Marinobacter aquaeolei).